The following is a 371-amino-acid chain: Leu/Ile/Val-binding protein homolog 2 (371 aa).

The N-terminal stretch at 1 to 23 (MKKSLFCGVCLCALVAMGGTSFA) is a signal peptide.

Belongs to the leucine-binding protein family.

Component of an amino-acid transport system. The sequence is that of Leu/Ile/Val-binding protein homolog 2 from Brucella abortus (strain 2308).